The chain runs to 484 residues: tRNA sulfurtransferase (484 aa).

Residues 63 to 167 (QGIRERLSCM…DQRLFVVHDQ (105 aa)) enclose the THUMP domain. Residues 185–186 (LM), K267, G289, and Q298 each bind ATP. C346 and C457 form a disulfide bridge. The Rhodanese domain occupies 405–483 (ALAGQVILDI…GHANVRVYRP (79 aa)). C457 serves as the catalytic Cysteine persulfide intermediate.

Belongs to the ThiI family.

It localises to the cytoplasm. The enzyme catalyses [ThiI sulfur-carrier protein]-S-sulfanyl-L-cysteine + a uridine in tRNA + 2 reduced [2Fe-2S]-[ferredoxin] + ATP + H(+) = [ThiI sulfur-carrier protein]-L-cysteine + a 4-thiouridine in tRNA + 2 oxidized [2Fe-2S]-[ferredoxin] + AMP + diphosphate. The catalysed reaction is [ThiS sulfur-carrier protein]-C-terminal Gly-Gly-AMP + S-sulfanyl-L-cysteinyl-[cysteine desulfurase] + AH2 = [ThiS sulfur-carrier protein]-C-terminal-Gly-aminoethanethioate + L-cysteinyl-[cysteine desulfurase] + A + AMP + 2 H(+). It participates in cofactor biosynthesis; thiamine diphosphate biosynthesis. Functionally, catalyzes the ATP-dependent transfer of a sulfur to tRNA to produce 4-thiouridine in position 8 of tRNAs, which functions as a near-UV photosensor. Also catalyzes the transfer of sulfur to the sulfur carrier protein ThiS, forming ThiS-thiocarboxylate. This is a step in the synthesis of thiazole, in the thiamine biosynthesis pathway. The sulfur is donated as persulfide by IscS. The sequence is that of tRNA sulfurtransferase from Pseudomonas syringae pv. syringae (strain B728a).